The following is a 194-amino-acid chain: Pyridoxine/pyridoxamine 5'-phosphate oxidase (194 aa).

FMN-binding positions include 42–47 (RVVLLK), 57–58 (FT), R63, K64, and Q86. K47 serves as a coordination point for substrate. Positions 104, 108, and 112 each coordinate substrate. FMN-binding positions include 121 to 122 (QS) and W166. Position 172-174 (172-174 (RIH)) interacts with substrate. R176 is a binding site for FMN.

The protein belongs to the pyridoxamine 5'-phosphate oxidase family. Homodimer. Requires FMN as cofactor.

The catalysed reaction is pyridoxamine 5'-phosphate + O2 + H2O = pyridoxal 5'-phosphate + H2O2 + NH4(+). It catalyses the reaction pyridoxine 5'-phosphate + O2 = pyridoxal 5'-phosphate + H2O2. Its pathway is cofactor metabolism; pyridoxal 5'-phosphate salvage; pyridoxal 5'-phosphate from pyridoxamine 5'-phosphate: step 1/1. It participates in cofactor metabolism; pyridoxal 5'-phosphate salvage; pyridoxal 5'-phosphate from pyridoxine 5'-phosphate: step 1/1. Its function is as follows. Catalyzes the oxidation of either pyridoxine 5'-phosphate (PNP) or pyridoxamine 5'-phosphate (PMP) into pyridoxal 5'-phosphate (PLP). The polypeptide is Pyridoxine/pyridoxamine 5'-phosphate oxidase (Ehrlichia ruminantium (strain Welgevonden)).